The chain runs to 163 residues: Cyclic pyranopterin monophosphate synthase (163 aa).

Residues 79-81 (LCH) and 117-118 (ME) each bind substrate. Asp132 is a catalytic residue.

It belongs to the MoaC family. As to quaternary structure, homohexamer; trimer of dimers.

It carries out the reaction (8S)-3',8-cyclo-7,8-dihydroguanosine 5'-triphosphate = cyclic pyranopterin phosphate + diphosphate. Its pathway is cofactor biosynthesis; molybdopterin biosynthesis. Catalyzes the conversion of (8S)-3',8-cyclo-7,8-dihydroguanosine 5'-triphosphate to cyclic pyranopterin monophosphate (cPMP). The protein is Cyclic pyranopterin monophosphate synthase of Chloroflexus aurantiacus (strain ATCC 29366 / DSM 635 / J-10-fl).